The sequence spans 546 residues: NADH-ubiquinone oxidoreductase chain 5 (546 aa).

Transmembrane regions (helical) follow at residues 1 to 21 (MFLL…SPIA), 31 to 51 (IIAI…YYEV), 52 to 72 (VFMG…VGTF), 82 to 102 (LLTA…HMYA), 112 to 132 (LNLF…LVAA), 135 to 155 (LLVM…LIGY), 175 to 195 (VSDG…GSLE), 198 to 218 (LLNV…GAMG), 237 to 257 (TPVS…YLLV), 264 to 284 (EMFV…FGAT), 291 to 310 (VIAY…LGLG), 321 to 341 (LMTH…VISG), 358 to 378 (AMFT…WPEL), 387 to 407 (ILNL…TLLL), 440 to 460 (VLPI…VWVG), and 468 to 488 (LFFL…AGIL).

The protein belongs to the complex I subunit 5 family.

Its subcellular location is the mitochondrion inner membrane. The enzyme catalyses a ubiquinone + NADH + 5 H(+)(in) = a ubiquinol + NAD(+) + 4 H(+)(out). Its function is as follows. Core subunit of the mitochondrial membrane respiratory chain NADH dehydrogenase (Complex I) that is believed to belong to the minimal assembly required for catalysis. Complex I functions in the transfer of electrons from NADH to the respiratory chain. The immediate electron acceptor for the enzyme is believed to be ubiquinone. The polypeptide is NADH-ubiquinone oxidoreductase chain 5 (ND5) (Chlamydomonas reinhardtii (Chlamydomonas smithii)).